The sequence spans 217 residues: Translation initiation factor IF-3 (217 aa).

The disordered stretch occupies residues 185 to 217 (YNLPETETTRIREENREKQKEKENTSKEGNKDA). Positions 191–217 (ETTRIREENREKQKEKENTSKEGNKDA) are enriched in basic and acidic residues.

Belongs to the IF-3 family. As to quaternary structure, monomer.

Its subcellular location is the cytoplasm. Functionally, IF-3 binds to the 30S ribosomal subunit and shifts the equilibrium between 70S ribosomes and their 50S and 30S subunits in favor of the free subunits, thus enhancing the availability of 30S subunits on which protein synthesis initiation begins. The protein is Translation initiation factor IF-3 of Methylacidiphilum infernorum (isolate V4) (Methylokorus infernorum (strain V4)).